Consider the following 84-residue polypeptide: Putative lipoprotein RzoQ (84 aa).

A signal peptide spans 1–22 (MRNRNLLKFLPGLLICLIVLTS). Cys23 carries the N-palmitoyl cysteine lipid modification. Cys23 is lipidated: S-diacylglycerol cysteine.

Its subcellular location is the cell membrane. This chain is Putative lipoprotein RzoQ (rzoQ), found in Escherichia coli (strain K12).